Consider the following 448-residue polypeptide: Protein Z-dependent protease inhibitor (448 aa).

A signal peptide spans 1 to 21 (MRVASSLFLPVLLTEVWLVTS). The tract at residues 33–70 (VHLESQDYENQTWEEYTRTDPREEEEEEEEKEEGKDEE) is disordered. Over residues 54–63 (REEEEEEEEK) the composition is skewed to acidic residues. The N-linked (GlcNAc...) asparagine glycan is linked to Asn-81. The segment at 140-157 (AGPLILPALFKKVKETFS) is heparin-binding. Asn-184, Asn-278, and Asn-299 each carry an N-linked (GlcNAc...) asparagine glycan.

It belongs to the serpin family. Post-translationally, phosphorylated by FAM20C in the extracellular medium. As to expression, detectable in liver, but not in heart, brain, spleen, lung, kidney, skeletal muscle or testes.

Its subcellular location is the secreted. Functionally, inhibits activity of the coagulation protease factor Xa in the presence of PROZ, calcium and phospholipids. Also inhibits factor XIa in the absence of cofactors. This chain is Protein Z-dependent protease inhibitor (Serpina10), found in Mus musculus (Mouse).